The sequence spans 335 residues: Mitochondrial thiamine diphosphate carrier 1 (335 aa).

6 helical membrane-spanning segments follow: residues 13 to 29, 88 to 105, 127 to 150, 182 to 199, 231 to 247, and 304 to 323; these read KRAV…GAIS, VPAL…FAVL, YLSY…FDLL, LYAG…YAGL, SLSS…SGTV, and GIVP…FVAY. Solcar repeat units follow at residues 13-111, 124-210, and 232-329; these read KRAV…VKSF, LSPY…FKRW, and LSSF…ASDW.

It belongs to the mitochondrial carrier (TC 2.A.29) family.

It localises to the mitochondrion inner membrane. In terms of biological role, mitochondrial transporter that mediates uptake of thiamine diphosphate (ThDP) into mitochondria. The protein is Mitochondrial thiamine diphosphate carrier 1 of Arabidopsis thaliana (Mouse-ear cress).